Here is a 453-residue protein sequence, read N- to C-terminus: Ribosome biogenesis protein YTM1 (453 aa).

Positions Val19–Arg102 are ubiquitin-like (UBL) domain. The tract at residues Ser112–Asn453 is sufficient for interaction with ERB1 and association with 66S pre-ribosomes. WD repeat units lie at residues Gly128–Tyr166, Gly168–Gly206, Gly218–Val257, Gly292–Thr332, Ser334–Gln373, Gly380–Thr420, and Gly422–Asn453.

This sequence belongs to the WD repeat WDR12/YTM1 family. As to quaternary structure, component of the NOP7 complex, composed of ERB1, NOP7 and YTM1. The complex is held together by ERB1, which interacts with NOP7 via its N-terminal domain and with YTM1 via a high-affinity interaction between the seven-bladed beta-propeller domains of the 2 proteins. The NOP7 complex associates with the 66S pre-ribosome. Interacts (via UBL domain) with MDN1 (via VWFA/MIDAS domain).

Its subcellular location is the nucleus. The protein localises to the nucleolus. The protein resides in the nucleoplasm. Its function is as follows. Component of the NOP7 complex, which is required for maturation of the 25S and 5.8S ribosomal RNAs and formation of the 60S ribosome. The sequence is that of Ribosome biogenesis protein YTM1 from Meyerozyma guilliermondii (strain ATCC 6260 / CBS 566 / DSM 6381 / JCM 1539 / NBRC 10279 / NRRL Y-324) (Yeast).